The primary structure comprises 302 residues: Sulfate adenylyltransferase subunit 2 (302 aa).

The protein belongs to the PAPS reductase family. CysD subfamily. In terms of assembly, heterodimer composed of CysD, the smaller subunit, and CysN.

It catalyses the reaction sulfate + ATP + H(+) = adenosine 5'-phosphosulfate + diphosphate. The protein operates within sulfur metabolism; hydrogen sulfide biosynthesis; sulfite from sulfate: step 1/3. With CysN forms the ATP sulfurylase (ATPS) that catalyzes the adenylation of sulfate producing adenosine 5'-phosphosulfate (APS) and diphosphate, the first enzymatic step in sulfur assimilation pathway. APS synthesis involves the formation of a high-energy phosphoric-sulfuric acid anhydride bond driven by GTP hydrolysis by CysN coupled to ATP hydrolysis by CysD. The protein is Sulfate adenylyltransferase subunit 2 of Xanthomonas euvesicatoria pv. vesicatoria (strain 85-10) (Xanthomonas campestris pv. vesicatoria).